A 279-amino-acid polypeptide reads, in one-letter code: RRP15-like protein (279 aa).

Disordered stretches follow at residues 1-40 (MALL…GANA), 56-120 (GPTV…TERR), and 200-279 (KSTA…DEED). The segment covering 73–83 (KTSEAAKKPGF) has biased composition (basic and acidic residues). 2 stretches are compositionally biased toward acidic residues: residues 93–104 (KEEDDDDEEDGD) and 213–224 (QETDDDDEDDTA). The segment covering 232–245 (KKSEWNVLREDFMT) has biased composition (basic and acidic residues). Over residues 267-279 (DEADDSDDDDEED) the composition is skewed to acidic residues.

The protein belongs to the RRP15 family.

In Drosophila pseudoobscura pseudoobscura (Fruit fly), this protein is RRP15-like protein.